Reading from the N-terminus, the 358-residue chain is Mitogen-activated protein kinase hog-1 (358 aa).

Residues 20 to 299 (YSDLQPVGMG…ATEALSHEYL (280 aa)) enclose the Protein kinase domain. ATP-binding positions include 26–34 (VGMGAFGLV) and lysine 49. Catalysis depends on aspartate 141, which acts as the Proton acceptor. Residue threonine 171 is modified to Phosphothreonine. The TXY signature appears at 171–173 (TGY). Tyrosine 173 carries the phosphotyrosine modification.

This sequence belongs to the protein kinase superfamily. Ser/Thr protein kinase family. MAP kinase subfamily. HOG1 sub-subfamily. It depends on Mg(2+) as a cofactor. Dually phosphorylated on Thr-171 and Tyr-173, which activates the enzyme. Phosphorylation is induced by fungicides and osmotic stress.

Its subcellular location is the cytoplasm. The protein resides in the nucleus. It carries out the reaction L-seryl-[protein] + ATP = O-phospho-L-seryl-[protein] + ADP + H(+). The enzyme catalyses L-threonyl-[protein] + ATP = O-phospho-L-threonyl-[protein] + ADP + H(+). With respect to regulation, activated by tyrosine and threonine phosphorylation. Functionally, proline-directed serine/threonine-protein kinase involved in a signal transduction pathway that is activated by changes in the osmolarity of the extracellular environment. Controls osmotic regulation of transcription of target genes. Involved in ion flux-mediated turgor regulation. This is Mitogen-activated protein kinase hog-1 (hog-1) from Neurospora crassa (strain ATCC 24698 / 74-OR23-1A / CBS 708.71 / DSM 1257 / FGSC 987).